The sequence spans 467 residues: 3-isopropylmalate dehydratase large subunit (467 aa).

The [4Fe-4S] cluster site is built by cysteine 347, cysteine 408, and cysteine 411.

The protein belongs to the aconitase/IPM isomerase family. LeuC type 1 subfamily. In terms of assembly, heterodimer of LeuC and LeuD. It depends on [4Fe-4S] cluster as a cofactor.

The enzyme catalyses (2R,3S)-3-isopropylmalate = (2S)-2-isopropylmalate. The protein operates within amino-acid biosynthesis; L-leucine biosynthesis; L-leucine from 3-methyl-2-oxobutanoate: step 2/4. Catalyzes the isomerization between 2-isopropylmalate and 3-isopropylmalate, via the formation of 2-isopropylmaleate. The chain is 3-isopropylmalate dehydratase large subunit from Bordetella pertussis (strain Tohama I / ATCC BAA-589 / NCTC 13251).